The chain runs to 433 residues: Pyrimidine-nucleoside phosphorylase (433 aa).

Phosphate is bound at residue 81 to 83; that stretch reads KHS. K(+) is bound by residues Gly88 and Thr90. Phosphate-binding positions include Thr92, 108 to 110, and Thr120; that span reads KMS. Positions 168 and 187 each coordinate substrate. K(+)-binding residues include Leu243, Ala246, and Glu255.

This sequence belongs to the thymidine/pyrimidine-nucleoside phosphorylase family. Homodimer. Requires K(+) as cofactor.

It carries out the reaction uridine + phosphate = alpha-D-ribose 1-phosphate + uracil. The catalysed reaction is thymidine + phosphate = 2-deoxy-alpha-D-ribose 1-phosphate + thymine. It catalyses the reaction 2'-deoxyuridine + phosphate = 2-deoxy-alpha-D-ribose 1-phosphate + uracil. Functionally, catalyzes phosphorolysis of the pyrimidine nucleosides uridine, thymidine and 2'-deoxyuridine with the formation of the corresponding pyrimidine base and ribose-1-phosphate. This Staphylococcus epidermidis (strain ATCC 35984 / DSM 28319 / BCRC 17069 / CCUG 31568 / BM 3577 / RP62A) protein is Pyrimidine-nucleoside phosphorylase (pdp).